The following is a 459-amino-acid chain: Phosphoglucosamine mutase (459 aa).

Ser106 (phosphoserine intermediate) is an active-site residue. Mg(2+) contacts are provided by Ser106, Asp247, Asp249, and Asp251. Position 106 is a phosphoserine (Ser106).

It belongs to the phosphohexose mutase family. Mg(2+) serves as cofactor. Post-translationally, activated by phosphorylation.

It catalyses the reaction alpha-D-glucosamine 1-phosphate = D-glucosamine 6-phosphate. Catalyzes the conversion of glucosamine-6-phosphate to glucosamine-1-phosphate. The sequence is that of Phosphoglucosamine mutase from Chlamydia muridarum (strain MoPn / Nigg).